A 158-amino-acid chain; its full sequence is MRCPYCQSEDTQVKDSRPAEDGAVIRRRRVCSVCGGRFTTFERVQLRDLMVVKKSGRRVPFDRDKLTRSIEVALRKRDVDSERVERAISGIVRQLESAGEAEVTSDEIGRLAMDALKGIDDIAYIRFASVYRNFSKAVDFHNVIDELTVSETGDNLET.

A zinc finger spans residues 3–34 (CPYCQSEDTQVKDSRPAEDGAVIRRRRVCSVC). Positions 49 to 139 (LMVVKKSGRR…VYRNFSKAVD (91 aa)) constitute an ATP-cone domain.

The protein belongs to the NrdR family. It depends on Zn(2+) as a cofactor.

Negatively regulates transcription of bacterial ribonucleotide reductase nrd genes and operons by binding to NrdR-boxes. The chain is Transcriptional repressor NrdR from Brucella abortus (strain S19).